The following is a 157-amino-acid chain: Protein Smg (157 aa).

Belongs to the Smg family.

The polypeptide is Protein Smg (Shigella boydii serotype 4 (strain Sb227)).